Consider the following 714-residue polypeptide: BRCA1-associated RING domain protein 1 (714 aa).

An RING-type zinc finger spans residues 25–63 (CPLCLKLLNRPVLLPCDHVFCDSCVHKSSQVESGCPVCK). Disordered regions lie at residues 106–165 (YKND…QDWT) and 254–283 (KAQN…DAME). Positions 118 to 134 (KHGESEDSEMTDKDVSK) are enriched in basic and acidic residues. The span at 135–147 (RSGGTDSSSRDGS) shows a compositional bias: low complexity. Composition is skewed to basic and acidic residues over residues 155–165 (SDPRPKHQDWT) and 264–283 (SHTE…DAME). The segment at 331–382 (ITICGFCQSARVSEATGEMLHYSRGRPVDGDDIFRSNVIHVHSACIEWAPQV) adopts a C2HC pre-PHD-type zinc-finger fold. A PHD-type zinc finger spans residues 402–451 (IKCTKCSLKGAALGCFVKSCRRSYHVPCAREISRCRWDYEDFLLLCPAHS). BRCT domains are found at residues 482–577 (EQTP…PFEI) and 598–713 (NKPK…HPVI).

In terms of assembly, component of a DNA-protein complex on WUS and WOX5 promoters. Interacts with SYD. Forms heterodimer with BRCA1. Expressed in the shoot apical meristem (SAM), roots, flowers, embryos and seedlings. Mostly expressed in flowers and siliques, and, to a lower extent, in roots, rosette leaves, inflorescence and young cauline leaves.

It localises to the nucleus. Binds specifically to H3K4me3 regions of target genes (e.g. WUS and WOX5) promoters to repress their transcription via chromatin remodeling. Required for the shoot apical meristem (SAM) organization and maintenance, by confining WUS expression to the organizing center, and for the quiescent center (QC) development in the root apical meristem (RAM), by repressing WOX5 expression in the root proximal meristem. Plays a role in DNA repair and in cell-cycle control. Required for the repair of DNA double-strand breaks (DSBs), both natural and induced by genotoxic stress, by homologous recombination (HR). The chain is BRCA1-associated RING domain protein 1 from Arabidopsis thaliana (Mouse-ear cress).